Reading from the N-terminus, the 2136-residue chain is Protein CELLULOSE SYNTHASE INTERACTIVE 3 (2136 aa).

ARM repeat units follow at residues 27–66 (MEMDDPEKAMATVAQLIEQLHAKTSSPQDKELTTARLLGI), 71–111 (REAR…VLCK), 113–152 (KDLRLKVLLGGCIPPLLSVLKSGTMETRKAAAEAIYEVSS), 159–201 (HIGM…NLCG), 204–243 (DGYWRLTLEGSGVDIVVSLLSSDNPNSQANAASLLARLVL), 246–286 (CDSI…ALSA), 289–337 (DEAK…NVFG), 376–417 (PESS…SLYG), 419–458 (SSLSCYLDDAEAKRVLIALITMASADVRERLIICLSGLCH), 461–500 (VGIWEAIGKREGIQLFISFLGLSSEQHQEYAVEMLKILTA), 503–542 (DDSKWAVTAAGGIPPLVQLLETGSQKAKEDAACILWNLCC), 545–584 (EEIRDCVERAGGIPAFLWLLKTGGPNSQETSAKTLVKLVH), 586–618 (ADPATINQLLALLLGDDPTSKIQVIEVLGHVLS), 619–663 (KASQ…DLFS), 666–705 (QDICGHLATDDIINPWIKLLTNNTQNVAKQVARALDALSR), 711–750 (NNKKKSYIAEGDIKSLIKLAKNSSIESAENAVSALANLLS), 752–791 (PDIAAEALAEDVVSAFTRILADGSPEGKRNASRALHQLLK), 811–848 (SLVDSLKSIDVDSADAFNILEVVALLAKTKSGVNFSYP), 849–887 (PWIALAEVPSSLETLVQCLAEGHTLVQDKAIEVLSRLCS), 936–980 (QLIT…GFLE), 1013–1041 (SVDAKSKVIVMEAGGLEVLVGKLARYTSS), 1042–1083 (AQAE…TLAV), 1109–1149 (RGIN…SLVK), 1163–1204 (EDVR…RIAD), 1207–1247 (DTNK…VLFS), 1249–1288 (HELRQNEMALSSLNQLIAVLRLGSRSARYSAAGALNELFD), 1290–1329 (ENIRNSEIACQAVQPLMDILGSVSESEQEVALSALIKLSS), 1333–1375 (SNTA…VVFS), 1377–1416 (KNIRTSASASGCMKPLITLMQSERSAAVEAAVFAIKILLD), 1418–1457 (EQHLELAAAHNIQELLVGLVSGKNYVIIEASLSALIKLGK), 1460–1499 (VPRKLDMVEAGIIERCLELLPGASSSLCSAVVELFRILTN), 1518–1546 (AVLLRSDLTLWGQHSALQALVNILEKQQT), 1547–1585 (LEAFSFTPSEAIVPLISFLESSSQAIQQLGAELLSHFLT), 1587–1626 (EDFQQDITTQSAVVPLVRLAGIGILSLQETAIKALEKISA), 1628–1669 (WPKA…NILQ), 1670–1704 (YDAECFFRVELPVLVKLLFSTIESTVLLALKALML), 1710–1750 (ASST…NNPR), 1790–1833 (SQHE…NFVM), 1836–1875 (RTNRRAVAEAGGVLLIQELLLSCNPEVSGQAALMVKFLFS), 1921–1960 (PKLRASEAATFCIPHLVGALKSGVEDVQGLVLDILYLLRH), 1969–2008 (VAKSQAMIAAEAIPVLQMLMKTCPPRFHDKADSLLHCLPG), and 2010–2035 (LTVNVMRANNLKQSMATTNAFCQLTI). The C2 domain occupies 1989-2106 (KTCPPRFHDK…VTEGEYSGSL (118 aa)).

Associates with cellulase synthase (CESA) complexes. Binds to cortical microtubules. Interacts with CESA3 and CESA6. As to expression, expressed in dark-grown hypocotyls, leaves (confined to vasculature and trichomes), stamen, pollen, developing siliques, and roots. Restricted in meristematic tissue of the shoot and root. Present in distinct punctae at the cell cortex, called microtubule-associated cellulose synthase compartments, that move with constant velocities of 10 to 3000 nm/min.

The protein localises to the cell membrane. Its subcellular location is the cytoplasm. It localises to the cytoskeleton. The protein resides in the endomembrane system. In terms of biological role, regulator of the microtubular cytoskeleton. Microtubule-associated protein involved in the association of cellulase synthase (CESA) complexes (CSCs) and cortical microtubules. Promotes dynamics of CSCs in the plasma membrane in both microtubules-dependent and microtubules-independent manners. Regulates primary cell wall biosynthesis and cellulose microfibrils organization. This Arabidopsis thaliana (Mouse-ear cress) protein is Protein CELLULOSE SYNTHASE INTERACTIVE 3.